We begin with the raw amino-acid sequence, 158 residues long: 2-C-methyl-D-erythritol 2,4-cyclodiphosphate synthase (158 aa).

Residues Asp-9 and His-11 each contribute to the a divalent metal cation site. Residues 9-11 (DVH) and 35-36 (HS) contribute to the 4-CDP-2-C-methyl-D-erythritol 2-phosphate site. His-43 is a binding site for a divalent metal cation. 4-CDP-2-C-methyl-D-erythritol 2-phosphate-binding positions include 57-59 (DIG), 62-66 (FPDTD), 133-136 (TTTE), Phe-140, and Arg-143.

It belongs to the IspF family. Homotrimer. Requires a divalent metal cation as cofactor.

The catalysed reaction is 4-CDP-2-C-methyl-D-erythritol 2-phosphate = 2-C-methyl-D-erythritol 2,4-cyclic diphosphate + CMP. It functions in the pathway isoprenoid biosynthesis; isopentenyl diphosphate biosynthesis via DXP pathway; isopentenyl diphosphate from 1-deoxy-D-xylulose 5-phosphate: step 4/6. Its function is as follows. Involved in the biosynthesis of isopentenyl diphosphate (IPP) and dimethylallyl diphosphate (DMAPP), two major building blocks of isoprenoid compounds. Catalyzes the conversion of 4-diphosphocytidyl-2-C-methyl-D-erythritol 2-phosphate (CDP-ME2P) to 2-C-methyl-D-erythritol 2,4-cyclodiphosphate (ME-CPP) with a corresponding release of cytidine 5-monophosphate (CMP). This Actinobacillus pleuropneumoniae serotype 7 (strain AP76) protein is 2-C-methyl-D-erythritol 2,4-cyclodiphosphate synthase.